A 147-amino-acid polypeptide reads, in one-letter code: Small ribosomal subunit protein eS19 (147 aa).

Belongs to the eukaryotic ribosomal protein eS19 family. As to quaternary structure, part of the 30S ribosomal subunit.

Its function is as follows. May be involved in maturation of the 30S ribosomal subunit. This Archaeoglobus fulgidus (strain ATCC 49558 / DSM 4304 / JCM 9628 / NBRC 100126 / VC-16) protein is Small ribosomal subunit protein eS19.